The sequence spans 202 residues: Large ribosomal subunit protein uL18 (202 aa).

Belongs to the universal ribosomal protein uL18 family. As to quaternary structure, part of the 50S ribosomal subunit. Contacts the 5S and 23S rRNAs.

Functionally, this is one of the proteins that bind and probably mediate the attachment of the 5S RNA into the large ribosomal subunit, where it forms part of the central protuberance. This is Large ribosomal subunit protein uL18 from Methanopyrus kandleri (strain AV19 / DSM 6324 / JCM 9639 / NBRC 100938).